The chain runs to 139 residues: ATP synthase epsilon chain (139 aa).

The protein belongs to the ATPase epsilon chain family. As to quaternary structure, F-type ATPases have 2 components, CF(1) - the catalytic core - and CF(0) - the membrane proton channel. CF(1) has five subunits: alpha(3), beta(3), gamma(1), delta(1), epsilon(1). CF(0) has three main subunits: a, b and c.

The protein localises to the cell inner membrane. Produces ATP from ADP in the presence of a proton gradient across the membrane. In Escherichia coli O139:H28 (strain E24377A / ETEC), this protein is ATP synthase epsilon chain.